An 862-amino-acid polypeptide reads, in one-letter code: DNA mismatch repair protein MutS (862 aa).

Glycine 608 to serine 615 serves as a coordination point for ATP.

It belongs to the DNA mismatch repair MutS family.

Functionally, this protein is involved in the repair of mismatches in DNA. It is possible that it carries out the mismatch recognition step. This protein has a weak ATPase activity. The protein is DNA mismatch repair protein MutS of Bacteroides fragilis (strain YCH46).